The following is a 1063-amino-acid chain: ATP-dependent helicase hrq1 (1063 aa).

Residues 224–243 (TQSRKNQPVPPDSPSIPNDS) are disordered. Positions 320-503 (INHLWNGFHV…KIFGVDNIKL (184 aa)) constitute a Helicase ATP-binding domain. 333–340 (TSTSSGKS) lines the ATP pocket. Positions 444-447 (DEAH) match the DEAH box motif. One can recognise a Helicase C-terminal domain in the interval 539–717 (EASKLLIKFA…ELPINIRSDE (179 aa)).

The protein belongs to the helicase family. HRQ1 subfamily. Forms heptamer rings. Interacts with rhp14. The cofactor is Mg(2+).

It is found in the nucleus. The enzyme catalyses Couples ATP hydrolysis with the unwinding of duplex DNA by translocating in the 3'-5' direction.. It carries out the reaction ATP + H2O = ADP + phosphate + H(+). Its function is as follows. Helicase with 3'-5' helicase activity involved in genome stability. Functions in the nucleotide excision repair (NER) pathway and plays a critical role in DNA interstrand cross-link repair. Unwinds relatively long duplex DNA up to 120-bp and requires a long 3'-tail of at least 70 nucleotides for efficient unwinding of duplex DNA. Shows both processive helicase and DNA strand annealing activities. Affects telomere length by a non-catalytic mechanism, probably through inhibiting telomerase by competing with it for ssDNA binding. In Schizosaccharomyces pombe (strain 972 / ATCC 24843) (Fission yeast), this protein is ATP-dependent helicase hrq1.